We begin with the raw amino-acid sequence, 679 residues long: Stress-70 protein, mitochondrial (679 aa).

Residues 1 to 46 (MISATRAAAARLVGTAASRTPAAARHQDGWNGLSHEAFRFVSRRDY) constitute a mitochondrion transit peptide. Residues 1-432 (MISATRAAAA…IQGGVLAGDV (432 aa)) form an interaction with NFS1 region. The ADP site is built by T63 and N64. Residues 63 to 431 (TNSCVAVMEG…AIQGGVLAGD (369 aa)) are nucleotide-binding domain (NBD). K76 is modified (N6-acetyllysine). A Phosphothreonine modification is found at T87. N6-acetyllysine; alternate occurs at positions 135 and 138. 2 positions are modified to N6-succinyllysine; alternate: K135 and K138. Position 143 is an N6-acetyllysine (K143). K206 carries the N6-acetyllysine; alternate modification. K206 is subject to N6-succinyllysine; alternate. An N6-malonyllysine; alternate modification is found at K206. An N6-acetyllysine mark is found at K234 and K288. N6-acetyllysine; alternate is present on K300. The residue at position 300 (K300) is an N6-succinyllysine; alternate. Positions 313, 316, and 320 each coordinate ADP. K360 is modified (N6-acetyllysine; alternate). K360 is modified (N6-succinyllysine; alternate). An N6-succinyllysine modification is found at K368. ADP-binding residues include G388 and R391. K394 carries the post-translational modification N6-succinyllysine. S408 is modified (phosphoserine). Residues 432-441 (VTDVLLLDVT) are interdomain linker. An interaction with FXN and ISCU region spans residues 432–679 (VTDVLLLDVT…QKEDQKEEKQ (248 aa)). The tract at residues 442-679 (PLSLGIETLG…QKEDQKEEKQ (238 aa)) is substrate-binding domain (SBD). Omega-N-methylarginine is present on R513. An N6-acetyllysine; alternate mark is found at K567 and K600. Residues K567 and K600 each carry the N6-succinyllysine; alternate modification. K610 carries the post-translational modification N6-succinyllysine. Position 612 is an N6-acetyllysine (K612). K646 bears the N6-acetyllysine; alternate mark. N6-succinyllysine; alternate is present on K646. Positions 656–679 (ASEREGSGSSGTGEQKEDQKEEKQ) are disordered. The segment covering 669–679 (EQKEDQKEEKQ) has biased composition (basic and acidic residues).

Belongs to the heat shock protein 70 family. As to quaternary structure, interacts strongly with the intermediate form of FXN and weakly with its mature form. Interacts with HSCB. Associates with the mitochondrial contact site and cristae organizing system (MICOS) complex, composed of at least MICOS10/MIC10, CHCHD3/MIC19, CHCHD6/MIC25, APOOL/MIC27, IMMT/MIC60, APOO/MIC23/MIC26 and QIL1/MIC13. This complex was also known under the names MINOS or MitOS complex. The MICOS complex associates with mitochondrial outer membrane proteins SAMM50, MTX1, MTX2 and DNAJC11, mitochondrial inner membrane protein TMEM11 and with HSPA9. Interacts with DNLZ, the interaction is required to prevent self-aggregation. Interacts with TESPA1. Interacts with PDPN. Interacts with NFU1, NFS1 and ISCU. Interacts with TP53; the interaction promotes TP53 degradation. Interacts (via SBD domain) with UBXN2A; the interaction with UBXN2A inhibits HSPA9/MOT-2 interaction with and degradation of TP53, thereby promotes TP53 translocation to the nucleus. Interacts with ITPR1 AND VDAC1; this interaction couples ITPR1 to VDAC1. Component of the TIM23 mitochondrial inner membrane pre-sequence translocase complex.

The protein resides in the mitochondrion. It is found in the nucleus. It localises to the nucleolus. Its subcellular location is the cytoplasm. The protein localises to the mitochondrion matrix. The enzyme catalyses ATP + H2O = ADP + phosphate + H(+). With respect to regulation, the chaperone activity is regulated by ATP-induced allosteric coupling of the nucleotide-binding (NBD) and substrate-binding (SBD) domains. ATP binding in the NBD leads to a conformational change in the NBD, which is transferred through the interdomain linker (IDL) to the substrate-binding domain (SBD). This elicits a reduced substrate affinity and a faster substrate exchange rate. Upon hydrolysis of ATP to ADP, the protein undergoes a conformational change that increases its affinity for substrate proteins. It cycles through repeated phases of ATP hydrolysis and nucleotide exchange, facilitating repeated cycles of substrate binding and release. Functions in collaboration with co-chaperones. Functions with the co-chaperone, DNLZ, to maintain solubility and regulate ATP hydrolysis. Nucleotide exchange factors, GRPEL1 and GRPEL2, accelerate nucleotide exchange. Functionally, mitochondrial chaperone that plays a key role in mitochondrial protein import, folding, and assembly. Plays an essential role in the protein quality control system, the correct folding of proteins, the re-folding of misfolded proteins, and the targeting of proteins for subsequent degradation. These processes are achieved through cycles of ATP binding, ATP hydrolysis, and ADP release, mediated by co-chaperones. In mitochondria, it associates with the TIM (translocase of the inner membrane) protein complex to assist in the import and folding of mitochondrial proteins. Plays an important role in mitochondrial iron-sulfur cluster (ISC) biogenesis, interacts with and stabilizes ISC cluster assembly proteins FXN, NFU1, NFS1 and ISCU. Regulates erythropoiesis via stabilization of ISC assembly. Regulates mitochondrial calcium-dependent apoptosis by coupling two calcium channels, ITPR1 and VDAC1, at the mitochondria-associated endoplasmic reticulum (ER) membrane to facilitate calcium transport from the ER lumen to the mitochondria intermembrane space, providing calcium for the downstream calcium channel MCU, which releases it into the mitochondrial matrix. Although primarily located in the mitochondria, it is also found in other cellular compartments. In the cytosol, it associates with proteins involved in signaling, apoptosis, or senescence. It may play a role in cell cycle regulation via its interaction with and promotion of degradation of TP53. May play a role in the control of cell proliferation and cellular aging. Protects against reactive oxygen species (ROS). Extracellular HSPA9 plays a cytoprotective role by preventing cell lysis following immune attack by the membrane attack complex by disrupting formation of the complex. This is Stress-70 protein, mitochondrial from Cricetulus griseus (Chinese hamster).